Consider the following 260-residue polypeptide: MKKLVLSLSLVLAFSSATAAFAAIPQNIRIGTDPTYAPFESKNSQGELVGFDIDLAKELCKRINTQCTFVENPLDALIPSLKAKKIDAIMSSLSITEKRQQEIAFTDKLYAADSRLVVAKNSDIQPTVESLKGKRVGVLQGTTQETFGNEHWAPKGIEIVSYQGQDNIYSDLTAGRIDAAFQDEVAASEGFLKQPVGKDYKFGGPSVKDEKLFGVGTGMGLRKEDNELREALNKAFAEMRADGTYEKLAKKYFDFDVYGG.

An N-terminal signal peptide occupies residues 1-22 (MKKLVLSLSLVLAFSSATAAFA). An intrachain disulfide couples cysteine 60 to cysteine 67. Positions 91, 92, 94, 99, 143, and 183 each coordinate L-histidine.

Belongs to the bacterial solute-binding protein 3 family. As to quaternary structure, the complex is composed of two ATP-binding proteins (HisP), two transmembrane proteins (HisM and HisQ) and a solute-binding protein (HisJ).

The protein resides in the periplasm. Its function is as follows. Part of the ABC transporter complex HisPMQJ involved in histidine transport. Binds histidine. Interacts with HisQMP and stimulates ATPase activity of HisP, which results in histidine translocation. In Escherichia coli O157:H7, this protein is Histidine-binding periplasmic protein (hisJ).